The following is a 396-amino-acid chain: Pinosylvin synthase 1 (396 aa).

Position 60-63 (60-63 (KFKR)) interacts with substrate. Cys170 is a catalytic residue. Substrate contacts are provided by residues Leu273 and 311–313 (GGH).

The protein belongs to the thiolase-like superfamily. Chalcone/stilbene synthases family. In terms of assembly, homodimer.

It is found in the cytoplasm. It catalyses the reaction (E)-cinnamoyl-CoA + 3 malonyl-CoA + 3 H(+) = (E)-pinosylvin + 4 CO2 + 4 CoA. The enzyme catalyses 3-phenylpropanoyl-CoA + 3 malonyl-CoA + 3 H(+) = dihydropinosylvin + 4 CO2 + 4 CoA. It participates in phytoalexin biosynthesis; pinosylvin biosynthesis. Functionally, catalyzes the production of pinosylvin from cinnamoyl-CoA and malonyl-CoA, and dihydropinosylvin from dihydrocinnamoyl-CoA. This Pinus strobus (Eastern white pine) protein is Pinosylvin synthase 1.